A 357-amino-acid chain; its full sequence is Anthranilate phosphoribosyltransferase (357 aa).

5-phospho-alpha-D-ribose 1-diphosphate-binding positions include glycine 91, 94–95 (GD), threonine 99, 101–104 (NIST), 119–127 (KHGNRSVSS), and serine 131. Glycine 91 contacts anthranilate. Residue serine 103 coordinates Mg(2+). Residue asparagine 122 participates in anthranilate binding. An anthranilate-binding site is contributed by arginine 177. Aspartate 235 and glutamate 236 together coordinate Mg(2+).

Belongs to the anthranilate phosphoribosyltransferase family. In terms of assembly, homodimer. The cofactor is Mg(2+).

It carries out the reaction N-(5-phospho-beta-D-ribosyl)anthranilate + diphosphate = 5-phospho-alpha-D-ribose 1-diphosphate + anthranilate. Its pathway is amino-acid biosynthesis; L-tryptophan biosynthesis; L-tryptophan from chorismate: step 2/5. Its function is as follows. Catalyzes the transfer of the phosphoribosyl group of 5-phosphorylribose-1-pyrophosphate (PRPP) to anthranilate to yield N-(5'-phosphoribosyl)-anthranilate (PRA). This chain is Anthranilate phosphoribosyltransferase, found in Shewanella baltica (strain OS195).